We begin with the raw amino-acid sequence, 892 residues long: Transposase for transposon Tn4556 (892 aa).

Residues 1–12 (MGGRAGLDDGRG) show a composition bias toward basic and acidic residues. Positions 1-63 (MGGRAGLDDG…GQPARDAEHR (63 aa)) are disordered. The span at 23 to 34 (VAEGAAGAAAWG) shows a compositional bias: low complexity.

This sequence belongs to the transposase 7 family.

In terms of biological role, required for transposition of transposon Tn4556. This Streptomyces fradiae (Streptomyces roseoflavus) protein is Transposase for transposon Tn4556 (tnpA).